The primary structure comprises 164 residues: Crossover junction endodeoxyribonuclease RuvC (164 aa).

Active-site residues include aspartate 7, glutamate 67, and aspartate 140. Residues aspartate 7, glutamate 67, and aspartate 140 each contribute to the Mg(2+) site.

The protein belongs to the RuvC family. As to quaternary structure, homodimer which binds Holliday junction (HJ) DNA. The HJ becomes 2-fold symmetrical on binding to RuvC with unstacked arms; it has a different conformation from HJ DNA in complex with RuvA. In the full resolvosome a probable DNA-RuvA(4)-RuvB(12)-RuvC(2) complex forms which resolves the HJ. Mg(2+) is required as a cofactor.

It is found in the cytoplasm. It carries out the reaction Endonucleolytic cleavage at a junction such as a reciprocal single-stranded crossover between two homologous DNA duplexes (Holliday junction).. In terms of biological role, the RuvA-RuvB-RuvC complex processes Holliday junction (HJ) DNA during genetic recombination and DNA repair. Endonuclease that resolves HJ intermediates. Cleaves cruciform DNA by making single-stranded nicks across the HJ at symmetrical positions within the homologous arms, yielding a 5'-phosphate and a 3'-hydroxyl group; requires a central core of homology in the junction. The consensus cleavage sequence is 5'-(A/T)TT(C/G)-3'. Cleavage occurs on the 3'-side of the TT dinucleotide at the point of strand exchange. HJ branch migration catalyzed by RuvA-RuvB allows RuvC to scan DNA until it finds its consensus sequence, where it cleaves and resolves the cruciform DNA. In Finegoldia magna (strain ATCC 29328 / DSM 20472 / WAL 2508) (Peptostreptococcus magnus), this protein is Crossover junction endodeoxyribonuclease RuvC.